The primary structure comprises 445 residues: ATP-dependent protease ATPase subunit HslU (445 aa).

ATP is bound by residues Ile17, 59–64 (GVGKTE), Asp254, Glu319, and Arg391.

Belongs to the ClpX chaperone family. HslU subfamily. As to quaternary structure, a double ring-shaped homohexamer of HslV is capped on each side by a ring-shaped HslU homohexamer. The assembly of the HslU/HslV complex is dependent on binding of ATP.

Its subcellular location is the cytoplasm. Its function is as follows. ATPase subunit of a proteasome-like degradation complex; this subunit has chaperone activity. The binding of ATP and its subsequent hydrolysis by HslU are essential for unfolding of protein substrates subsequently hydrolyzed by HslV. HslU recognizes the N-terminal part of its protein substrates and unfolds these before they are guided to HslV for hydrolysis. This chain is ATP-dependent protease ATPase subunit HslU, found in Pseudomonas fluorescens (strain SBW25).